The primary structure comprises 195 residues: Imidazole glycerol phosphate synthase subunit HisH (195 aa).

The Glutamine amidotransferase type-1 domain occupies 1–195; sequence MIAVVDLGIG…LRLLENFRRL (195 aa). The active-site Nucleophile is Cys-72. Catalysis depends on residues His-177 and Glu-179.

In terms of assembly, heterodimer of HisH and HisF.

Its subcellular location is the cytoplasm. It catalyses the reaction 5-[(5-phospho-1-deoxy-D-ribulos-1-ylimino)methylamino]-1-(5-phospho-beta-D-ribosyl)imidazole-4-carboxamide + L-glutamine = D-erythro-1-(imidazol-4-yl)glycerol 3-phosphate + 5-amino-1-(5-phospho-beta-D-ribosyl)imidazole-4-carboxamide + L-glutamate + H(+). The catalysed reaction is L-glutamine + H2O = L-glutamate + NH4(+). It functions in the pathway amino-acid biosynthesis; L-histidine biosynthesis; L-histidine from 5-phospho-alpha-D-ribose 1-diphosphate: step 5/9. Functionally, IGPS catalyzes the conversion of PRFAR and glutamine to IGP, AICAR and glutamate. The HisH subunit catalyzes the hydrolysis of glutamine to glutamate and ammonia as part of the synthesis of IGP and AICAR. The resulting ammonia molecule is channeled to the active site of HisF. This is Imidazole glycerol phosphate synthase subunit HisH from Thermococcus kodakarensis (strain ATCC BAA-918 / JCM 12380 / KOD1) (Pyrococcus kodakaraensis (strain KOD1)).